We begin with the raw amino-acid sequence, 421 residues long: Serine hydroxymethyltransferase (421 aa).

(6S)-5,6,7,8-tetrahydrofolate is bound by residues Leu118 and 122–124 (GHL). Lys226 carries the post-translational modification N6-(pyridoxal phosphate)lysine. (6S)-5,6,7,8-tetrahydrofolate is bound at residue Glu242.

It belongs to the SHMT family. Homodimer. Pyridoxal 5'-phosphate serves as cofactor.

The protein localises to the cytoplasm. It catalyses the reaction (6R)-5,10-methylene-5,6,7,8-tetrahydrofolate + glycine + H2O = (6S)-5,6,7,8-tetrahydrofolate + L-serine. It functions in the pathway one-carbon metabolism; tetrahydrofolate interconversion. It participates in amino-acid biosynthesis; glycine biosynthesis; glycine from L-serine: step 1/1. Catalyzes the reversible interconversion of serine and glycine with tetrahydrofolate (THF) serving as the one-carbon carrier. This reaction serves as the major source of one-carbon groups required for the biosynthesis of purines, thymidylate, methionine, and other important biomolecules. Also exhibits THF-independent aldolase activity toward beta-hydroxyamino acids, producing glycine and aldehydes, via a retro-aldol mechanism. In Mycoplasmopsis synoviae (strain 53) (Mycoplasma synoviae), this protein is Serine hydroxymethyltransferase.